Reading from the N-terminus, the 161-residue chain is Crossover junction endodeoxyribonuclease RuvC (161 aa).

Active-site residues include Asp9, Glu72, and Asp144. Residues Asp9, Glu72, and Asp144 each contribute to the Mg(2+) site.

This sequence belongs to the RuvC family. Homodimer which binds Holliday junction (HJ) DNA. The HJ becomes 2-fold symmetrical on binding to RuvC with unstacked arms; it has a different conformation from HJ DNA in complex with RuvA. In the full resolvosome a probable DNA-RuvA(4)-RuvB(12)-RuvC(2) complex forms which resolves the HJ. It depends on Mg(2+) as a cofactor.

The protein resides in the cytoplasm. It carries out the reaction Endonucleolytic cleavage at a junction such as a reciprocal single-stranded crossover between two homologous DNA duplexes (Holliday junction).. Functionally, the RuvA-RuvB-RuvC complex processes Holliday junction (HJ) DNA during genetic recombination and DNA repair. Endonuclease that resolves HJ intermediates. Cleaves cruciform DNA by making single-stranded nicks across the HJ at symmetrical positions within the homologous arms, yielding a 5'-phosphate and a 3'-hydroxyl group; requires a central core of homology in the junction. The consensus cleavage sequence is 5'-(A/T)TT(C/G)-3'. Cleavage occurs on the 3'-side of the TT dinucleotide at the point of strand exchange. HJ branch migration catalyzed by RuvA-RuvB allows RuvC to scan DNA until it finds its consensus sequence, where it cleaves and resolves the cruciform DNA. In Synechococcus sp. (strain ATCC 27144 / PCC 6301 / SAUG 1402/1) (Anacystis nidulans), this protein is Crossover junction endodeoxyribonuclease RuvC.